The following is a 103-amino-acid chain: Large ribosomal subunit protein eL14 (103 aa).

Belongs to the eukaryotic ribosomal protein eL14 family.

The polypeptide is Large ribosomal subunit protein eL14 (Ignicoccus hospitalis (strain KIN4/I / DSM 18386 / JCM 14125)).